The chain runs to 595 residues: Aspartate--tRNA(Asp/Asn) ligase (595 aa).

An L-aspartate-binding site is contributed by E178. Residues 202 to 205 (QLFK) are aspartate. R224 provides a ligand contact to L-aspartate. ATP is bound by residues 224-226 (RDE) and Q233. H458 lines the L-aspartate pocket. E488 is a binding site for ATP. R495 provides a ligand contact to L-aspartate. 540–543 (GLDR) is an ATP binding site.

This sequence belongs to the class-II aminoacyl-tRNA synthetase family. Type 1 subfamily. Homodimer.

The protein localises to the cytoplasm. It carries out the reaction tRNA(Asx) + L-aspartate + ATP = L-aspartyl-tRNA(Asx) + AMP + diphosphate. Its function is as follows. Aspartyl-tRNA synthetase with relaxed tRNA specificity since it is able to aspartylate not only its cognate tRNA(Asp) but also tRNA(Asn). Reaction proceeds in two steps: L-aspartate is first activated by ATP to form Asp-AMP and then transferred to the acceptor end of tRNA(Asp/Asn). The sequence is that of Aspartate--tRNA(Asp/Asn) ligase from Trichodesmium erythraeum (strain IMS101).